Consider the following 392-residue polypeptide: Putative purine permease 19 (392 aa).

Residues 1–16 (MGFHTKSPDRVTHEEE) are compositionally biased toward basic and acidic residues. Residues 1 to 29 (MGFHTKSPDRVTHEEEANIGVDNQPRETT) form a disordered region. The residue at position 30 (S30) is a Phosphoserine. 10 helical membrane-spanning segments follow: residues 46–66 (ICIF…TLLL), 88–108 (WLQS…LLLW), 128–148 (LFLL…LYAI), 154–174 (VFFL…TTII), 182–202 (WIIL…TSSG), 220–240 (WCAF…QLGF), 254–274 (VILM…VGLF), 300–320 (LIGL…LVCL), 325–345 (FSNV…VLAF), and 354–374 (FFKE…VYSL).

This sequence belongs to the purine permeases (TC 2.A.7.14) family.

It is found in the membrane. The sequence is that of Putative purine permease 19 (PUP19) from Arabidopsis thaliana (Mouse-ear cress).